Reading from the N-terminus, the 275-residue chain is Formamidopyrimidine-DNA glycosylase (275 aa).

Pro-2 functions as the Schiff-base intermediate with DNA in the catalytic mechanism. Glu-3 (proton donor) is an active-site residue. The active-site Proton donor; for beta-elimination activity is the Lys-58. 3 residues coordinate DNA: His-93, Arg-111, and Arg-156. The FPG-type zinc-finger motif lies at 241–275; that stretch reads FVYDRAGEPCRVCGTPIRQIVQGQRSTYFCPTCQR. The active-site Proton donor; for delta-elimination activity is Arg-265.

The protein belongs to the FPG family. As to quaternary structure, monomer. Zn(2+) is required as a cofactor.

The enzyme catalyses Hydrolysis of DNA containing ring-opened 7-methylguanine residues, releasing 2,6-diamino-4-hydroxy-5-(N-methyl)formamidopyrimidine.. It carries out the reaction 2'-deoxyribonucleotide-(2'-deoxyribose 5'-phosphate)-2'-deoxyribonucleotide-DNA = a 3'-end 2'-deoxyribonucleotide-(2,3-dehydro-2,3-deoxyribose 5'-phosphate)-DNA + a 5'-end 5'-phospho-2'-deoxyribonucleoside-DNA + H(+). Functionally, involved in base excision repair of DNA damaged by oxidation or by mutagenic agents. Acts as a DNA glycosylase that recognizes and removes damaged bases. Has a preference for oxidized purines, such as 7,8-dihydro-8-oxoguanine (8-oxoG). Has AP (apurinic/apyrimidinic) lyase activity and introduces nicks in the DNA strand. Cleaves the DNA backbone by beta-delta elimination to generate a single-strand break at the site of the removed base with both 3'- and 5'-phosphates. This is Formamidopyrimidine-DNA glycosylase from Burkholderia multivorans (strain ATCC 17616 / 249).